The primary structure comprises 231 residues: Ribonuclease HII (231 aa).

The RNase H type-2 domain maps to 23-214; sequence GPVAGVDEAG…VAKAHREWAL (192 aa). A divalent metal cation is bound by residues Asp29, Glu30, and Asp123.

It belongs to the RNase HII family. Mn(2+) is required as a cofactor. It depends on Mg(2+) as a cofactor.

It localises to the cytoplasm. The enzyme catalyses Endonucleolytic cleavage to 5'-phosphomonoester.. Functionally, endonuclease that specifically degrades the RNA of RNA-DNA hybrids. This Corynebacterium efficiens (strain DSM 44549 / YS-314 / AJ 12310 / JCM 11189 / NBRC 100395) protein is Ribonuclease HII.